A 75-amino-acid chain; its full sequence is MKADIHPDYHEINIIMTDGTEYKTRSCYGKPGDTLRLDIDPKSHPAWTGQQRVLDTGGQVAKFNKRFAGIGARKK.

This sequence belongs to the bacterial ribosomal protein bL31 family. Type A subfamily. In terms of assembly, part of the 50S ribosomal subunit.

Functionally, binds the 23S rRNA. The sequence is that of Large ribosomal subunit protein bL31 from Acidiphilium cryptum (strain JF-5).